The following is a 359-amino-acid chain: 3-dehydroquinate synthase (359 aa).

Residues 71–76 (DGEAYK), 105–109 (GVVGD), 129–130 (TT), lysine 142, and lysine 151 each bind NAD(+). Zn(2+)-binding residues include glutamate 184, histidine 247, and histidine 264.

This sequence belongs to the sugar phosphate cyclases superfamily. Dehydroquinate synthase family. Co(2+) serves as cofactor. The cofactor is Zn(2+). NAD(+) is required as a cofactor.

It localises to the cytoplasm. It carries out the reaction 7-phospho-2-dehydro-3-deoxy-D-arabino-heptonate = 3-dehydroquinate + phosphate. Its pathway is metabolic intermediate biosynthesis; chorismate biosynthesis; chorismate from D-erythrose 4-phosphate and phosphoenolpyruvate: step 2/7. In terms of biological role, catalyzes the conversion of 3-deoxy-D-arabino-heptulosonate 7-phosphate (DAHP) to dehydroquinate (DHQ). This Burkholderia cenocepacia (strain HI2424) protein is 3-dehydroquinate synthase.